Reading from the N-terminus, the 1221-residue chain is Reverse gyrase subunit B (1221 aa).

Residues 56–97 form an RG N-terminal-type zinc finger; that stretch reads NEPVAIFGSSCVLCGGDCSSVRLTSRIGICERCLPVDTETLR. Zn(2+) contacts are provided by C66, C69, C85, and C88. ATP contacts are provided by residues Q161 and 178–185; that span reads APTGTGKT. Residues 165–400 form the Helicase ATP-binding domain; it reads TRRLVKGCSF…AVVRELFDFE (236 aa). Positions 284–287 match the DEAD box motif; it reads DDVD. The region spanning 424-600 is the Helicase C-terminal domain; that stretch reads AVERIVRKAG…PLSLNTLMKL (177 aa). Positions 779-935 constitute a Toprim domain; the sequence is SALMIVESPN…QVYRTEFHEV (157 aa). E785 serves as a coordination point for Mg(2+). The segment at 856 to 882 adopts an RG C-terminal-type zinc-finger fold; that stretch reads LGRCSECGEQVVGSEECPNCGGEVELK. Positions 859, 862, 872, and 875 each coordinate Zn(2+). Mg(2+) is bound at residue D904. The 269-residue stretch at 953–1221 folds into the Topo IA-type catalytic domain; the sequence is DAGRVSAQIL…MLHLAGVSGR (269 aa).

The protein in the C-terminal section; belongs to the type IA topoisomerase family. This sequence in the N-terminal section; belongs to the DEAD box helicase family. DDVD subfamily. Heterodimer of an RgyrA and RgyrB subunit. The topoisomerase domain is shared between the two subunits. The cofactor is Zn(2+). It depends on Mg(2+) as a cofactor. In terms of processing, the N-terminus is partially blocked.

It localises to the cytoplasm. It carries out the reaction ATP + H2O = ADP + phosphate + H(+). Functionally, modifies the topological state of DNA by introducing positive supercoils in an ATP-dependent process; dATP also allows positive supercoiling. Increases the linking number in steps of +1. Only this subunit binds ATP, it does so in a DNA- and RgyA-independent manner. Hydrolyzes ATP only in the presence of DNA. The RgyA subunit transiently cleaves a single DNA strand and remains covalently bound to the 5' DNA end probably through a tyrosine residue. It changes linking number in steps of one, and nicks DNA preferentially at 5'-CNNN | 3'-sites with a strong preference for 4 pyrimidine residues. There are about 1000 heterodimers per cell. May be involved in rewinding the DNA strands in the regions of the chromosome that have opened up to allow transcription or replication. Its function is as follows. This subunit expressed in E.coli only has DNA-dependent ATPase activity at 80 degrees Celsius. Reverse gyrase activity is reconstituted after incubation at 80 degrees Celsius for 5 minutes, positive supercoiling requires ATP and Mg(2+). In the presence of ATP it binds and nicks substrate but does not make closed product. This Methanopyrus kandleri (strain AV19 / DSM 6324 / JCM 9639 / NBRC 100938) protein is Reverse gyrase subunit B.